The following is a 634-amino-acid chain: MVKQTTEMNDASYLFNTGAGFNSQDYLGCHLAASGRAVFRVWAPHAKAVGVVGDFNDWQPSALKLLGATGIWQGQVPNVHAGQLYKFQITTPTGQVQLKIDPFAQQFERKPGDAAVVVEPMTMRWHDSLWLARRKKSRAANRPINIYEVHLGSWRRHLDGSYYTYAELAAELIPYVKQRGYTHIELMPVMEHLLDASWGYQQLGYFAPTSRFGKRDSFLSFVDQCHQANIGVFVDWVPGHFIRNYDALYQYDGTPTFEYADPERANNRRWGAWNFDLGKTQVQSFLISSAEYWLDQCHLDGLRVDAVSNMLYCDYDEGREGQVNQYGDNRNLEGIAFLQKLNTTVLTHHPDILMIAEESSAYPQVTGSVANGGLGFNYKWNMGWMHDTLDFFMMDPLYRHDHFNLLTFAFVYMFDERFILPFSHDEVVHGKKSLMHKMSGDRYNQFANLRTMLTYMAAFPGKQLNFMGSEWGQFLEWRDWSALEWVDLKDDLNHRMQQFTTQLNAVYRHNRPLWEQDHDPAGIIYTHTDDPDSSTMGFIRQAKRKYSFVVAAFNFVPVERQDYRIGVPYRGRYELLLNTEAQAFGGTWTKLETTFTAVDKPYRGQPASFTVTLPAMGALLIRPVKVIGGVKHAR.

Residue Asp-305 is the Nucleophile of the active site. Catalysis depends on Glu-357, which acts as the Proton donor.

This sequence belongs to the glycosyl hydrolase 13 family. GlgB subfamily. As to quaternary structure, monomer.

It catalyses the reaction Transfers a segment of a (1-&gt;4)-alpha-D-glucan chain to a primary hydroxy group in a similar glucan chain.. Its pathway is glycan biosynthesis; glycogen biosynthesis. In terms of biological role, catalyzes the formation of the alpha-1,6-glucosidic linkages in glycogen by scission of a 1,4-alpha-linked oligosaccharide from growing alpha-1,4-glucan chains and the subsequent attachment of the oligosaccharide to the alpha-1,6 position. In Lactiplantibacillus plantarum (strain ATCC BAA-793 / NCIMB 8826 / WCFS1) (Lactobacillus plantarum), this protein is 1,4-alpha-glucan branching enzyme GlgB.